Reading from the N-terminus, the 230-residue chain is Orotidine 5'-phosphate decarboxylase (230 aa).

Residues D11, K34, 61–70 (DLKLHDIPNT), T117, R179, Q188, G208, and R209 each bind substrate. The Proton donor role is filled by K63.

It belongs to the OMP decarboxylase family. Type 1 subfamily. As to quaternary structure, homodimer.

The enzyme catalyses orotidine 5'-phosphate + H(+) = UMP + CO2. It functions in the pathway pyrimidine metabolism; UMP biosynthesis via de novo pathway; UMP from orotate: step 2/2. Functionally, catalyzes the decarboxylation of orotidine 5'-monophosphate (OMP) to uridine 5'-monophosphate (UMP). The protein is Orotidine 5'-phosphate decarboxylase of Streptococcus pyogenes serotype M1.